Reading from the N-terminus, the 546-residue chain is Glucose-6-phosphate isomerase (546 aa).

The Proton donor role is filled by Glu-356. Catalysis depends on residues His-387 and Lys-507.

It belongs to the GPI family.

It is found in the cytoplasm. It catalyses the reaction alpha-D-glucose 6-phosphate = beta-D-fructose 6-phosphate. It participates in carbohydrate biosynthesis; gluconeogenesis. Its pathway is carbohydrate degradation; glycolysis; D-glyceraldehyde 3-phosphate and glycerone phosphate from D-glucose: step 2/4. Functionally, catalyzes the reversible isomerization of glucose-6-phosphate to fructose-6-phosphate. This chain is Glucose-6-phosphate isomerase, found in Syntrophus aciditrophicus (strain SB).